We begin with the raw amino-acid sequence, 317 residues long: Insulin-like growth factor-binding protein 2 (317 aa).

Residues methionine 1–alanine 33 form the signal peptide. The IGFBP N-terminal domain occupies valine 35–histidine 126. Disulfide bonds link cysteine 39/cysteine 76, cysteine 42/cysteine 78, cysteine 50/cysteine 79, cysteine 68/cysteine 82, cysteine 90/cysteine 103, and cysteine 97/cysteine 123. 2 disordered regions span residues lysine 125–valine 151 and glutamate 189–proline 218. The Thyroglobulin type-1 domain maps to arginine 216–cysteine 298. 3 disulfide bridges follow: cysteine 219-cysteine 253, cysteine 264-cysteine 275, and cysteine 277-cysteine 298. Positions arginine 293–aspartate 295 match the Cell attachment site motif.

As to quaternary structure, interacts with IGF1. Interacts with IGF2. Interacts (via RGD motif) with integrin alpha5/ITGA5; this interaction induces cell migration, adhesion or apoptosis according to the context. Interacts with PTPRB; this interaction leads to PTPRB dimerization and inactivation. In terms of processing, cleaved by MMP9 leading to release of free IGF2 from IGFBP2-IGF2 complex, which contributes to enhance the motility and the growth of astrocytes. Post-translationally, O-glycosylated. Expressed in abundance in selected adult tissues, namely liver, kidney, adrenal, pituitary and choroid plexus.

It localises to the secreted. In terms of biological role, multifunctional protein that plays a critical role in regulating the availability of IGFs such as IGF1 and IGF2 to their receptors and thereby regulates IGF-mediated cellular processes including proliferation, differentiation, and apoptosis in a cell-type specific manner. Functions coordinately with receptor protein tyrosine phosphatase beta/PTPRB and the IGF1 receptor to regulate IGF1-mediated signaling by stimulating the phosphorylation of PTEN leading to its inactivation and AKT1 activation. Plays a positive role in cell migration via interaction with integrin alpha5/ITGA5 through an RGD motif. Additionally, interaction with ITGA5/ITGB1 enhances the adhesion of endothelial progenitor cells to endothelial cells. Upon mitochondrial damage, facilitates apoptosis with ITGA5 of podocytes, and then activates the phosphorylation of focal adhesion kinase (FAK)-mediated mitochondrial injury. In Ovis aries (Sheep), this protein is Insulin-like growth factor-binding protein 2 (IGFBP2).